A 118-amino-acid chain; its full sequence is uncharacterized protein (118 aa).

The next 4 helical transmembrane spans lie at 5-20 (IVFYLILLCLFISVVM), 25-42 (VIRTIANVICFIFVLLYF), 53-73 (ALAILSICFLFLVGICAFIIL), and 83-103 (LFFTGLETIAGILLIIVSLSI).

Its subcellular location is the cell membrane. This is an uncharacterized protein from Bacillus subtilis (strain 168).